A 410-amino-acid chain; its full sequence is Translation initiation factor 2 subunit gamma (410 aa).

Residues Gln-6–Glu-203 form the tr-type G domain. The G1 stretch occupies residues Gly-15 to Thr-22. Mg(2+) contacts are provided by Asp-18, Thr-22, Gly-43, and Ser-45. Position 18–23 (Asp-18–Ser-23) interacts with GTP. Positions Gly-43 to Arg-47 are G2. 4 residues coordinate Zn(2+): Cys-58, Cys-61, Cys-73, and Cys-76. The interval Asp-90 to Gly-93 is G3. GTP is bound by residues Asn-146–Asp-149 and Ser-181–His-183. The segment at Asn-146 to Asp-149 is G4. Residues Ser-181 to His-183 are G5.

This sequence belongs to the TRAFAC class translation factor GTPase superfamily. Classic translation factor GTPase family. EIF2G subfamily. As to quaternary structure, heterotrimer composed of an alpha, a beta and a gamma chain. The cofactor is Mg(2+).

The enzyme catalyses GTP + H2O = GDP + phosphate + H(+). EIF-2 functions in the early steps of protein synthesis by forming a ternary complex with GTP and initiator tRNA. This Methanococcus aeolicus (strain ATCC BAA-1280 / DSM 17508 / OCM 812 / Nankai-3) protein is Translation initiation factor 2 subunit gamma.